The sequence spans 483 residues: Probable Xaa-Pro aminopeptidase MCYG_06503 (483 aa).

The Mn(2+) site is built by Asp233, Asp244, Glu409, and Glu453.

Belongs to the peptidase M24B family. Mn(2+) is required as a cofactor.

The enzyme catalyses Release of any N-terminal amino acid, including proline, that is linked to proline, even from a dipeptide or tripeptide.. Functionally, catalyzes the removal of a penultimate prolyl residue from the N-termini of peptides. The protein is Probable Xaa-Pro aminopeptidase MCYG_06503 of Arthroderma otae (strain ATCC MYA-4605 / CBS 113480) (Microsporum canis).